A 372-amino-acid polypeptide reads, in one-letter code: 4-hydroxy-3-methylbut-2-en-1-yl diphosphate synthase (flavodoxin) (372 aa).

Positions 270, 273, 305, and 312 each coordinate [4Fe-4S] cluster.

Belongs to the IspG family. It depends on [4Fe-4S] cluster as a cofactor.

It carries out the reaction (2E)-4-hydroxy-3-methylbut-2-enyl diphosphate + oxidized [flavodoxin] + H2O + 2 H(+) = 2-C-methyl-D-erythritol 2,4-cyclic diphosphate + reduced [flavodoxin]. Its pathway is isoprenoid biosynthesis; isopentenyl diphosphate biosynthesis via DXP pathway; isopentenyl diphosphate from 1-deoxy-D-xylulose 5-phosphate: step 5/6. In terms of biological role, converts 2C-methyl-D-erythritol 2,4-cyclodiphosphate (ME-2,4cPP) into 1-hydroxy-2-methyl-2-(E)-butenyl 4-diphosphate. The polypeptide is 4-hydroxy-3-methylbut-2-en-1-yl diphosphate synthase (flavodoxin) (Alcanivorax borkumensis (strain ATCC 700651 / DSM 11573 / NCIMB 13689 / SK2)).